Consider the following 315-residue polypeptide: Lipoyl synthase (315 aa).

[4Fe-4S] cluster contacts are provided by C62, C67, C73, C88, C92, C95, and S302. A Radical SAM core domain is found at 73–291 (CFGHGTATFM…GELAKKLGFS (219 aa)).

This sequence belongs to the radical SAM superfamily. Lipoyl synthase family. Requires [4Fe-4S] cluster as cofactor.

The protein localises to the cytoplasm. The enzyme catalyses [[Fe-S] cluster scaffold protein carrying a second [4Fe-4S](2+) cluster] + N(6)-octanoyl-L-lysyl-[protein] + 2 oxidized [2Fe-2S]-[ferredoxin] + 2 S-adenosyl-L-methionine + 4 H(+) = [[Fe-S] cluster scaffold protein] + N(6)-[(R)-dihydrolipoyl]-L-lysyl-[protein] + 4 Fe(3+) + 2 hydrogen sulfide + 2 5'-deoxyadenosine + 2 L-methionine + 2 reduced [2Fe-2S]-[ferredoxin]. The protein operates within protein modification; protein lipoylation via endogenous pathway; protein N(6)-(lipoyl)lysine from octanoyl-[acyl-carrier-protein]: step 2/2. Its function is as follows. Catalyzes the radical-mediated insertion of two sulfur atoms into the C-6 and C-8 positions of the octanoyl moiety bound to the lipoyl domains of lipoate-dependent enzymes, thereby converting the octanoylated domains into lipoylated derivatives. The polypeptide is Lipoyl synthase (Coxiella burnetii (strain Dugway 5J108-111)).